A 1201-amino-acid chain; its full sequence is DNA-directed RNA polymerase subunit beta' (1201 aa).

Zn(2+)-binding residues include C60, C62, C75, and C78. Positions 449, 451, and 453 each coordinate Mg(2+). C818, C892, C899, and C902 together coordinate Zn(2+).

It belongs to the RNA polymerase beta' chain family. The RNAP catalytic core consists of 2 alpha, 1 beta, 1 beta' and 1 omega subunit. When a sigma factor is associated with the core the holoenzyme is formed, which can initiate transcription. It depends on Mg(2+) as a cofactor. Requires Zn(2+) as cofactor.

The enzyme catalyses RNA(n) + a ribonucleoside 5'-triphosphate = RNA(n+1) + diphosphate. DNA-dependent RNA polymerase catalyzes the transcription of DNA into RNA using the four ribonucleoside triphosphates as substrates. In Listeria monocytogenes serotype 4b (strain F2365), this protein is DNA-directed RNA polymerase subunit beta'.